We begin with the raw amino-acid sequence, 906 residues long: Coatomer subunit beta' (906 aa).

WD repeat units lie at residues 13–52, 55–94, 97–136, 140–180, 183–224, 227–266, 350–388, and 390–425; these read ARSDRVKSVDLHPTEPWMLASLYNGSVCVWNHETQTLVKT, VCDLPVRAAKFVARKNWVVTGADDMQIRVFNYNTLERVHM, AHSDYIRCIAVHPTQPFILTSSDDMLIKLWDWDKKWSCSQ, GHTH…PNFT, GHEK…CVQT, GHAQNVSCASFHPELPIIITGSEDGTVRIWHSSTYRLEST, SCEIYPQTIQHNPNGRFVVVCGDGEYIIYTAMALRNKSF, and SAQEFAWAHDSSEYAIRESNSVVKIFKNFKEKKSFK. N6-acetyllysine is present on Lys627. One copy of the WD 9 repeat lies at 746 to 783; it reads IRTGRLPEAAFLARTYLPSQVSRVVKLWRENLSKVNQK. Residues 837–862 form a disordered region; that stretch reads EEAKGFQPSRSTAQQELDGKPASPTP. Phosphoserine is present on Ser859. Position 861 is a phosphothreonine (Thr861). Residues 866-890 adopt a coiled-coil conformation; the sequence is ASHTANKEEKSLLELEVDLDNLELE.

This sequence belongs to the WD repeat COPB2 family. As to quaternary structure, oligomeric complex that consists of at least the alpha, beta, beta', gamma, delta, epsilon and zeta subunits. Probably interacts with PEX11A. Interacts with SCYL1. Interacts with JAGN1.

It is found in the cytoplasm. The protein localises to the cytosol. It localises to the golgi apparatus membrane. Its subcellular location is the cytoplasmic vesicle. The protein resides in the COPI-coated vesicle membrane. Functionally, the coatomer is a cytosolic protein complex that binds to dilysine motifs and reversibly associates with Golgi non-clathrin-coated vesicles, which further mediate biosynthetic protein transport from the ER, via the Golgi up to the trans Golgi network. Coatomer complex is required for budding from Golgi membranes, and is essential for the retrograde Golgi-to-ER transport of dilysine-tagged proteins. In mammals, the coatomer can only be recruited by membranes associated to ADP-ribosylation factors (ARFs), which are small GTP-binding proteins; the complex also influences the Golgi structural integrity, as well as the processing, activity, and endocytic recycling of LDL receptors. Its function is as follows. This coatomer complex protein, essential for Golgi budding and vesicular trafficking, is a selective binding protein (RACK) for protein kinase C, epsilon type. It binds to Golgi membranes in a GTP-dependent manner. This chain is Coatomer subunit beta' (COPB2), found in Macaca fascicularis (Crab-eating macaque).